A 339-amino-acid chain; its full sequence is Phenylalanine--tRNA ligase alpha subunit (339 aa).

Glu253 lines the Mg(2+) pocket.

The protein belongs to the class-II aminoacyl-tRNA synthetase family. Phe-tRNA synthetase alpha subunit type 1 subfamily. Tetramer of two alpha and two beta subunits. Requires Mg(2+) as cofactor.

The protein resides in the cytoplasm. It catalyses the reaction tRNA(Phe) + L-phenylalanine + ATP = L-phenylalanyl-tRNA(Phe) + AMP + diphosphate + H(+). This Chromohalobacter salexigens (strain ATCC BAA-138 / DSM 3043 / CIP 106854 / NCIMB 13768 / 1H11) protein is Phenylalanine--tRNA ligase alpha subunit.